We begin with the raw amino-acid sequence, 360 residues long: MLLDKLEFIENKYDELSVKISDPSIMQNQNEWRKLCKEHADLEVIVNSYREYKKVVEDLKANKEMLSGESDKEMREMLNEEITDLTNREEQLETEIQILLLPKDPNDDKNVFVEIRGGAGGEEAALFAYNLFRMYTRYAETQRWGVEIMSLNETDLGGFKEVVFMIKGNGAYSKLKYESGVHRVQRVPDTESSGRIHTSTATVAVLPEVDDVEIEVADKDVRIDVFRASGNGGQCVNTTDSAVRITHLPTGLVVSCQDEKSQLKNKEKAMKVLKSRLYEQAERERAQGIAEDRKSQVGTGDRSERIRTYNYPQGRITDHRIGLTLYKLDTFLGGDIDEMINALITADQAEKMKLMGNTQM.

Glutamine 234 is modified (N5-methylglutamine). A disordered region spans residues 285 to 305; it reads RAQGIAEDRKSQVGTGDRSER.

This sequence belongs to the prokaryotic/mitochondrial release factor family. Post-translationally, methylated by PrmC. Methylation increases the termination efficiency of RF1.

It is found in the cytoplasm. Peptide chain release factor 1 directs the termination of translation in response to the peptide chain termination codons UAG and UAA. This chain is Peptide chain release factor 1, found in Clostridium beijerinckii (strain ATCC 51743 / NCIMB 8052) (Clostridium acetobutylicum).